The following is a 357-amino-acid chain: MAEFIRAQIFGTTFEITSRYSDLQPVGMGAFGLVCSARDQLTNQNVAVKKIMKPFSTPVLAKRTYRELKLLKHLRHENVISLSDIFISPLEDIYFVTELLGTDLHRLLTSRPLEKQFIQYFLYQIMRGLKYVHSAGVVHRDLKPSNILVNENCDLKICDFGLARIQDPQMTGYVSTRYYRAPEIMLTWQKYDVEVDIWSAGCIFAEMLEGKPLFPGKDHVNQFSIITELLGTPPDDVINTIASENTLRFVKSLPKRERQPLKNKFKNADPSAIDLLERMLVFDPKKRITATEALSHDYLAPYHDPTDEPVAEEKFDWSFNDADLPVDTWKIMMYSEILDYHNVDASAQQIEEQFNGQ.

Residues 20 to 299 (YSDLQPVGMG…ATEALSHDYL (280 aa)) enclose the Protein kinase domain. ATP is bound by residues 26–34 (VGMGAFGLV) and lysine 49. Catalysis depends on aspartate 141, which acts as the Proton acceptor. Threonine 171 carries the phosphothreonine modification. The TXY signature appears at 171-173 (TGY). The residue at position 173 (tyrosine 173) is a Phosphotyrosine.

It belongs to the protein kinase superfamily. Ser/Thr protein kinase family. MAP kinase subfamily. HOG1 sub-subfamily. Mg(2+) serves as cofactor. Dually phosphorylated on Thr-171 and Tyr-173, which activates the enzyme.

It is found in the cytoplasm. It localises to the nucleus. It catalyses the reaction L-seryl-[protein] + ATP = O-phospho-L-seryl-[protein] + ADP + H(+). The enzyme catalyses L-threonyl-[protein] + ATP = O-phospho-L-threonyl-[protein] + ADP + H(+). Its activity is regulated as follows. Activated by tyrosine and threonine phosphorylation. In terms of biological role, proline-directed serine/threonine-protein kinase involved in a signal transduction pathway that is activated by changes in the osmolarity of the extracellular environment. Controls osmotic regulation of transcription of target genes. This is Mitogen-activated protein kinase HOG1 (HOG1) from Colletotrichum orbiculare (strain 104-T / ATCC 96160 / CBS 514.97 / LARS 414 / MAFF 240422) (Cucumber anthracnose fungus).